The following is a 144-amino-acid chain: Large ribosomal subunit protein uL15 (144 aa).

A disordered region spans residues 1 to 58 (MRLNTLSPAAGSKPSKKRVGRGIGSGLGKTGGRGHKGQKSRSGGSVRPGFEGGQMPLK). Residues 21–31 (RGIGSGLGKTG) are compositionally biased toward gly residues.

The protein belongs to the universal ribosomal protein uL15 family. Part of the 50S ribosomal subunit.

Binds to the 23S rRNA. The sequence is that of Large ribosomal subunit protein uL15 from Vibrio atlanticus (strain LGP32) (Vibrio splendidus (strain Mel32)).